The primary structure comprises 116 residues: Putative pterin-4-alpha-carbinolamine dehydratase 1 (116 aa).

Belongs to the pterin-4-alpha-carbinolamine dehydratase family.

It carries out the reaction (4aS,6R)-4a-hydroxy-L-erythro-5,6,7,8-tetrahydrobiopterin = (6R)-L-erythro-6,7-dihydrobiopterin + H2O. This is Putative pterin-4-alpha-carbinolamine dehydratase 1 from Cupriavidus pinatubonensis (strain JMP 134 / LMG 1197) (Cupriavidus necator (strain JMP 134)).